The chain runs to 68 residues: MQVSVRDNNVDQALRALKKKLQREGVFREMKLKQHYEKPSEKKAREKAEAIRRARKLARKKAQREGGL.

It belongs to the bacterial ribosomal protein bS21 family.

The polypeptide is Small ribosomal subunit protein bS21 (Dinoroseobacter shibae (strain DSM 16493 / NCIMB 14021 / DFL 12)).